Reading from the N-terminus, the 221-residue chain is Serine/arginine-rich splicing factor 2 (221 aa).

An RRM domain is found at 14–92; that stretch reads TSLKVDNLTY…RELRVQMARY (79 aa). Residues 91–221 are disordered; sequence RYGRPPDSHH…SPEEEGAVSS (131 aa). Composition is skewed to basic residues over residues 117 to 171 and 179 to 189; these read RRSR…RSKS and SRSRSRSRSRS.

Belongs to the splicing factor SR family. Extensively phosphorylated on serine residues in the RS domain.

It localises to the nucleus. In terms of biological role, necessary for the splicing of pre-mRNA. It is required for formation of the earliest ATP-dependent splicing complex and interacts with spliceosomal components bound to both the 5'- and 3'-splice sites during spliceosome assembly. It also is required for ATP-dependent interactions of both U1 and U2 snRNPs with pre-mRNA. The chain is Serine/arginine-rich splicing factor 2 (SRSF2) from Gallus gallus (Chicken).